The following is a 73-amino-acid chain: Toxin Td7 (73 aa).

A signal peptide spans 1–7; sequence IGMAVEC. One can recognise an LCN-type CS-alpha/beta domain in the interval 8–70; sequence KDGYLVGADG…VWDSATNRCG (63 aa). Intrachain disulfides connect Cys18/Cys69, Cys22/Cys44, Cys30/Cys50, and Cys34/Cys52. A Lysine amide modification is found at Lys71.

The protein belongs to the long (4 C-C) scorpion toxin superfamily. Sodium channel inhibitor family. Beta subfamily. In terms of tissue distribution, expressed by the venom gland.

It is found in the secreted. In terms of biological role, beta toxins bind voltage-independently at site-4 of sodium channels (Nav) and shift the voltage of activation toward more negative potentials thereby affecting sodium channel activation and promoting spontaneous and repetitive firing. In Tityus discrepans (Venezuelan scorpion), this protein is Toxin Td7.